A 333-amino-acid polypeptide reads, in one-letter code: Tetraacyldisaccharide 4'-kinase (333 aa).

55–62 (TAGGNGKT) is a binding site for ATP.

The protein belongs to the LpxK family.

It catalyses the reaction a lipid A disaccharide + ATP = a lipid IVA + ADP + H(+). It functions in the pathway glycolipid biosynthesis; lipid IV(A) biosynthesis; lipid IV(A) from (3R)-3-hydroxytetradecanoyl-[acyl-carrier-protein] and UDP-N-acetyl-alpha-D-glucosamine: step 6/6. Transfers the gamma-phosphate of ATP to the 4'-position of a tetraacyldisaccharide 1-phosphate intermediate (termed DS-1-P) to form tetraacyldisaccharide 1,4'-bis-phosphate (lipid IVA). The sequence is that of Tetraacyldisaccharide 4'-kinase from Pectobacterium atrosepticum (strain SCRI 1043 / ATCC BAA-672) (Erwinia carotovora subsp. atroseptica).